Reading from the N-terminus, the 151-residue chain is Small ribosomal subunit protein uS15 (151 aa).

The protein belongs to the universal ribosomal protein uS15 family. Component of the small ribosomal subunit. Mature ribosomes consist of a small (40S) and a large (60S) subunit. The 40S subunit contains about 32 different proteins and 1 molecule of RNA (18S). The 60S subunit contains 45 different proteins and 3 molecules of RNA (25S, 5.8S and 5S).

It is found in the cytoplasm. Functionally, component of the ribosome, a large ribonucleoprotein complex responsible for the synthesis of proteins in the cell. The small ribosomal subunit (SSU) binds messenger RNAs (mRNAs) and translates the encoded message by selecting cognate aminoacyl-transfer RNA (tRNA) molecules. The large subunit (LSU) contains the ribosomal catalytic site termed the peptidyl transferase center (PTC), which catalyzes the formation of peptide bonds, thereby polymerizing the amino acids delivered by tRNAs into a polypeptide chain. The nascent polypeptides leave the ribosome through a tunnel in the LSU and interact with protein factors that function in enzymatic processing, targeting, and the membrane insertion of nascent chains at the exit of the ribosomal tunnel. This Candida albicans (strain SC5314 / ATCC MYA-2876) (Yeast) protein is Small ribosomal subunit protein uS15 (RPS13).